Consider the following 379-residue polypeptide: 4-hydroxy-3-methylbut-2-enyl diphosphate reductase (379 aa).

Cys-39 provides a ligand contact to [4Fe-4S] cluster. Position 69 (His-69) interacts with (2E)-4-hydroxy-3-methylbut-2-enyl diphosphate. Residue His-69 coordinates dimethylallyl diphosphate. Position 69 (His-69) interacts with isopentenyl diphosphate. Cys-130 is a binding site for [4Fe-4S] cluster. Position 158 (His-158) interacts with (2E)-4-hydroxy-3-methylbut-2-enyl diphosphate. Residue His-158 participates in dimethylallyl diphosphate binding. Position 158 (His-158) interacts with isopentenyl diphosphate. Residue Glu-160 is the Proton donor of the active site. Thr-223 contacts (2E)-4-hydroxy-3-methylbut-2-enyl diphosphate. Residue Cys-261 coordinates [4Fe-4S] cluster. (2E)-4-hydroxy-3-methylbut-2-enyl diphosphate contacts are provided by Ser-290, Ser-291, Asn-292, and Ser-352. Dimethylallyl diphosphate contacts are provided by Ser-290, Ser-291, Asn-292, and Ser-352. Isopentenyl diphosphate is bound by residues Ser-290, Ser-291, Asn-292, and Ser-352.

Belongs to the IspH family. It depends on [4Fe-4S] cluster as a cofactor.

It carries out the reaction isopentenyl diphosphate + 2 oxidized [2Fe-2S]-[ferredoxin] + H2O = (2E)-4-hydroxy-3-methylbut-2-enyl diphosphate + 2 reduced [2Fe-2S]-[ferredoxin] + 2 H(+). It catalyses the reaction dimethylallyl diphosphate + 2 oxidized [2Fe-2S]-[ferredoxin] + H2O = (2E)-4-hydroxy-3-methylbut-2-enyl diphosphate + 2 reduced [2Fe-2S]-[ferredoxin] + 2 H(+). The protein operates within isoprenoid biosynthesis; dimethylallyl diphosphate biosynthesis; dimethylallyl diphosphate from (2E)-4-hydroxy-3-methylbutenyl diphosphate: step 1/1. It functions in the pathway isoprenoid biosynthesis; isopentenyl diphosphate biosynthesis via DXP pathway; isopentenyl diphosphate from 1-deoxy-D-xylulose 5-phosphate: step 6/6. Functionally, catalyzes the conversion of 1-hydroxy-2-methyl-2-(E)-butenyl 4-diphosphate (HMBPP) into a mixture of isopentenyl diphosphate (IPP) and dimethylallyl diphosphate (DMAPP). Acts in the terminal step of the DOXP/MEP pathway for isoprenoid precursor biosynthesis. This is 4-hydroxy-3-methylbut-2-enyl diphosphate reductase from Synechocystis sp. (strain ATCC 27184 / PCC 6803 / Kazusa).